The sequence spans 681 residues: tRNA wybutosine-synthesizing protein 4 (681 aa).

Basic residues predominate over residues 1–11 (MSNKNQRKTKS). The disordered stretch occupies residues 1–21 (MSNKNQRKTKSKDREVRKTND). S-adenosyl-L-methionine-binding positions include Arg-66, Gly-92, Asp-119, 165-166 (NL), and Glu-193.

The protein belongs to the methyltransferase superfamily. LCMT family.

The enzyme catalyses 7-[(3S)-3-amino-3-carboxypropyl]wyosine(37) in tRNA(Phe) + S-adenosyl-L-methionine = 7-[(3S)-(3-amino-3-methoxycarbonyl)propyl]wyosine(37) in tRNA(Phe) + S-adenosyl-L-homocysteine. It catalyses the reaction 7-[(3S)-(3-amino-3-methoxycarbonyl)propyl]wyosine(37) in tRNA(Phe) + S-adenosyl-L-methionine + CO2 = wybutosine(37) in tRNA(Phe) + S-adenosyl-L-homocysteine + 2 H(+). Its pathway is tRNA modification; wybutosine-tRNA(Phe) biosynthesis. Functionally, probable S-adenosyl-L-methionine-dependent methyltransferase that acts as a component of the wybutosine biosynthesis pathway. Wybutosine is a hyper modified guanosine with a tricyclic base found at the 3'-position adjacent to the anticodon of eukaryotic phenylalanine tRNA. May methylate the carboxyl group of leucine residues to form alpha-leucine ester residues. The sequence is that of tRNA wybutosine-synthesizing protein 4 (ppm2) from Schizosaccharomyces pombe (strain 972 / ATCC 24843) (Fission yeast).